The primary structure comprises 517 residues: Dermokine (517 aa).

A signal peptide spans 1 to 21; that stretch reads MKLQGSLACLLLALCLGGGAA. 2 disordered regions span residues 51–83 and 123–364; these read VGQG…MGSR and AGSW…IQKE. 2 stretches are compositionally biased toward gly residues: residues 127–145 and 167–176; these read GTSG…GVQG and GSVGQGGNGG. Over residues 197–206 the composition is skewed to polar residues; sequence RGNNQNSGCT. Residues 212–235 are compositionally biased toward low complexity; it reads GSHESFSNSGGSSNDGSRGSQGSH. Positions 236-250 are enriched in gly residues; it reads GSNGQGSSGRGGGQG. Over residues 251-289 the composition is skewed to low complexity; sequence NSDNNGSSSSSSGSNSGNSNSGNSGNSNSGNSGNSGSGS. Composition is skewed to gly residues over residues 308–332 and 347–358; these read GSRG…GGGN and GGSGSQGHGSNG.

Belongs to the dermokine family. In terms of assembly, homooligomer. Seems to be able to homodimerize and homotrimerize. In terms of processing, O-glycosylated. In terms of tissue distribution, highly expressed in stratified epithelia; such as the skin, tongue, esophagus, forestomach and vagina. Also found in lung, trachea and urinary bladder.

It is found in the secreted. May act as a soluble regulator of keratinocyte differentiation. This Mus musculus (Mouse) protein is Dermokine (Dmkn).